Consider the following 238-residue polypeptide: Major prion protein (238 aa).

A signal peptide spans 1 to 15 (MLVLFVATWSDLGLC). The interval 16–215 (KKRPKPGGWN…ESQAYYQRGS (200 aa)) is interaction with GRB2, ERI3 and SYN1. Residues 18-93 (RPKPGGWNTG…WHKPSKPKTS (76 aa)) are disordered. 4 consecutive repeat copies span residues 44 to 52 (PQGGGGWGQ), 53 to 60 (PHGGGWGQ), 61 to 68 (PHGGGWGQ), and 69 to 76 (PHGGGWGQ). The tract at residues 44-83 (PQGGGGWGQPHGGGWGQPHGGGWGQPHGGGWGQGGGTHNQ) is 4 X 8 AA tandem repeats of P-H-G-G-G-W-G-Q. Residues 45–80 (QGGGGWGQPHGGGWGQPHGGGWGQPHGGGWGQGGGT) are compositionally biased toward gly residues. 11 residues coordinate Cu(2+): G47, G48, H54, G55, G56, H62, G63, G64, H70, G71, and G72. Basic residues predominate over residues 83–93 (QWHKPSKPKTS). An intrachain disulfide couples C164 to C199. N166 and N182 each carry an N-linked (GlcNAc...) asparagine glycan. The GPI-anchor amidated serine moiety is linked to residue S215. Residues 216-238 (SIVLFSSPPVILLISFLIFLIVG) constitute a propeptide, removed in mature form.

It belongs to the prion family. In terms of assembly, monomer and homodimer. Has a tendency to aggregate into amyloid fibrils containing a cross-beta spine, formed by a steric zipper of superposed beta-strands. Soluble oligomers may represent an intermediate stage on the path to fibril formation. Copper binding may promote oligomerization. Interacts with GRB2, APP, ERI3/PRNPIP and SYN1. Mislocalized cytosolically exposed PrP interacts with MGRN1; this interaction alters MGRN1 subcellular location and causes lysosomal enlargement. Interacts with KIAA1191.

The protein resides in the cell membrane. The protein localises to the golgi apparatus. Its function is as follows. Its primary physiological function is unclear. Has cytoprotective activity against internal or environmental stresses. May play a role in neuronal development and synaptic plasticity. May be required for neuronal myelin sheath maintenance. May play a role in iron uptake and iron homeostasis. Soluble oligomers are toxic to cultured neuroblastoma cells and induce apoptosis (in vitro). Association with GPC1 (via its heparan sulfate chains) targets PRNP to lipid rafts. Also provides Cu(2+) or Zn(2+) for the ascorbate-mediated GPC1 deaminase degradation of its heparan sulfate side chains. The chain is Major prion protein (PRNP) from Theropithecus gelada (Gelada baboon).